The chain runs to 447 residues: Phosphoglucosamine mutase (447 aa).

The active-site Phosphoserine intermediate is serine 101. Serine 101, aspartate 242, aspartate 244, and aspartate 246 together coordinate Mg(2+). At serine 101 the chain carries Phosphoserine.

This sequence belongs to the phosphohexose mutase family. Mg(2+) is required as a cofactor. In terms of processing, activated by phosphorylation.

It carries out the reaction alpha-D-glucosamine 1-phosphate = D-glucosamine 6-phosphate. Catalyzes the conversion of glucosamine-6-phosphate to glucosamine-1-phosphate. The polypeptide is Phosphoglucosamine mutase (Methylobacterium radiotolerans (strain ATCC 27329 / DSM 1819 / JCM 2831 / NBRC 15690 / NCIMB 10815 / 0-1)).